A 301-amino-acid chain; its full sequence is tRNA (guanine-N(7)-)-methyltransferase (301 aa).

Residues 1–26 (MSETPDSPRPVTPGSQASFGTYGGRP) are disordered. Residues Glu-85, Glu-110, Asn-137, and Asp-160 each contribute to the S-adenosyl-L-methionine site. Asp-160 is a catalytic residue. Lys-164 and Asp-196 together coordinate substrate. Positions 244-270 (APVREGRAPVSTEHTGPNEGVDEEGGW) are disordered. A substrate-binding site is contributed by 280 to 283 (TSFE).

This sequence belongs to the class I-like SAM-binding methyltransferase superfamily. TrmB family.

It catalyses the reaction guanosine(46) in tRNA + S-adenosyl-L-methionine = N(7)-methylguanosine(46) in tRNA + S-adenosyl-L-homocysteine. It functions in the pathway tRNA modification; N(7)-methylguanine-tRNA biosynthesis. In terms of biological role, catalyzes the formation of N(7)-methylguanine at position 46 (m7G46) in tRNA. The protein is tRNA (guanine-N(7)-)-methyltransferase of Paenarthrobacter aurescens (strain TC1).